The sequence spans 216 residues: DNA-directed RNA polymerase subunit alpha (216 aa).

It belongs to the RNA polymerase alpha chain family. In plastids the minimal PEP RNA polymerase catalytic core is composed of four subunits: alpha, beta, beta', and beta''. When a (nuclear-encoded) sigma factor is associated with the core the holoenzyme is formed, which can initiate transcription.

The protein localises to the plastid. It is found in the chloroplast. The enzyme catalyses RNA(n) + a ribonucleoside 5'-triphosphate = RNA(n+1) + diphosphate. Functionally, DNA-dependent RNA polymerase catalyzes the transcription of DNA into RNA using the four ribonucleoside triphosphates as substrates. The protein is DNA-directed RNA polymerase subunit alpha (rpoA) of Euglena gracilis.